We begin with the raw amino-acid sequence, 154 residues long: Interleukin-2 (154 aa).

An N-terminal signal peptide occupies residues 1 to 20; it reads MYRMQLLSCIALSLALVTNS. T23 carries an O-linked (GalNAc...) threonine glycan. C78 and C126 are disulfide-bonded.

The protein belongs to the IL-2 family.

It is found in the secreted. Cytokine produced by activated CD4-positive helper T-cells and to a lesser extend activated CD8-positive T-cells and natural killer (NK) cells that plays pivotal roles in the immune response and tolerance. Binds to a receptor complex composed of either the high-affinity trimeric IL-2R (IL2RA/CD25, IL2RB/CD122 and IL2RG/CD132) or the low-affinity dimeric IL-2R (IL2RB and IL2RG). Interaction with the receptor leads to oligomerization and conformation changes in the IL-2R subunits resulting in downstream signaling starting with phosphorylation of JAK1 and JAK3. In turn, JAK1 and JAK3 phosphorylate the receptor to form a docking site leading to the phosphorylation of several substrates including STAT5. This process leads to activation of several pathways including STAT, phosphoinositide-3-kinase/PI3K and mitogen-activated protein kinase/MAPK pathways. Functions as a T-cell growth factor and can increase NK-cell cytolytic activity as well. Promotes strong proliferation of activated B-cells and subsequently immunoglobulin production. Plays a pivotal role in regulating the adaptive immune system by controlling the survival and proliferation of regulatory T-cells, which are required for the maintenance of immune tolerance. Moreover, participates in the differentiation and homeostasis of effector T-cell subsets, including Th1, Th2, Th17 as well as memory CD8-positive T-cells. The chain is Interleukin-2 (IL2) from Macaca mulatta (Rhesus macaque).